The following is a 214-amino-acid chain: Thymidylate kinase (214 aa).

ATP is bound at residue 9 to 16 (GVDGSGKS).

Belongs to the thymidylate kinase family.

It catalyses the reaction dTMP + ATP = dTDP + ADP. In terms of biological role, phosphorylation of dTMP to form dTDP in both de novo and salvage pathways of dTTP synthesis. In Symbiobacterium thermophilum (strain DSM 24528 / JCM 14929 / IAM 14863 / T), this protein is Thymidylate kinase.